The following is a 208-amino-acid chain: Uracil phosphoribosyltransferase (208 aa).

5-phospho-alpha-D-ribose 1-diphosphate-binding positions include R78, R103, and 130 to 138; that span reads DPMLATGGT. Uracil is bound by residues I193 and 198-200; that span reads GDA. D199 contacts 5-phospho-alpha-D-ribose 1-diphosphate.

The protein belongs to the UPRTase family. It depends on Mg(2+) as a cofactor.

The enzyme catalyses UMP + diphosphate = 5-phospho-alpha-D-ribose 1-diphosphate + uracil. It participates in pyrimidine metabolism; UMP biosynthesis via salvage pathway; UMP from uracil: step 1/1. Its activity is regulated as follows. Allosterically activated by GTP. Catalyzes the conversion of uracil and 5-phospho-alpha-D-ribose 1-diphosphate (PRPP) to UMP and diphosphate. The sequence is that of Uracil phosphoribosyltransferase from Blochmanniella floridana.